The following is a 321-amino-acid chain: Viral T-cell receptor beta chain-like T17T-22 (321 aa).

Residues 1–28 (MISWLPSVAMGSRLLCCVALCLLGAGPA) form the signal peptide. A v segment region spans residues 29-122 (DSGLTQTPRH…DSALYLCASS (94 aa)). N-linked (GlcNAc...) asparagine; by host glycosylation is present at Asn-105. Positions 123–128 (PNEDSE) are d segment. The segment at 129-144 (YGETLYFGEGSRLTVV) is j segment. Positions 145-321 (EDLKKVSPPK…LMAKVKRKDS (177 aa)) are c region. N-linked (GlcNAc...) asparagine; by host glycosylation is found at Asn-214 and Asn-264.

The protein is Viral T-cell receptor beta chain-like T17T-22 (V-TCR) of Feline leukemia virus.